A 122-amino-acid chain; its full sequence is MIQPQTLLNVADNSGARELMCIRIIGASNRRYAHIGDVIVAVIKEAVPNMSLERSEVVRAVIVRTCKELKRDNGMIIRYDDNAAVVIDQEGNPKGTRVFGAIARELRHLNFTKIVSLAPEVL.

The protein belongs to the universal ribosomal protein uL14 family. In terms of assembly, part of the 50S ribosomal subunit.

It localises to the plastid. The protein localises to the chloroplast. Binds to 23S rRNA. In Acorus calamus (Sweet flag), this protein is Large ribosomal subunit protein uL14c.